The chain runs to 159 residues: S-ribosylhomocysteine lyase (159 aa).

Residues His53, His57, and Cys124 each coordinate Fe cation.

Belongs to the LuxS family. As to quaternary structure, homodimer. It depends on Fe cation as a cofactor.

The enzyme catalyses S-(5-deoxy-D-ribos-5-yl)-L-homocysteine = (S)-4,5-dihydroxypentane-2,3-dione + L-homocysteine. Functionally, involved in the synthesis of autoinducer 2 (AI-2) which is secreted by bacteria and is used to communicate both the cell density and the metabolic potential of the environment. The regulation of gene expression in response to changes in cell density is called quorum sensing. Catalyzes the transformation of S-ribosylhomocysteine (RHC) to homocysteine (HC) and 4,5-dihydroxy-2,3-pentadione (DPD). The chain is S-ribosylhomocysteine lyase from Clostridium beijerinckii (strain ATCC 51743 / NCIMB 8052) (Clostridium acetobutylicum).